A 406-amino-acid polypeptide reads, in one-letter code: Bifunctional enzyme IspD/IspF (406 aa).

A 2-C-methyl-D-erythritol 4-phosphate cytidylyltransferase region spans residues 1-247; it reads MSLIRVNGEA…TPFFNPAKDT (247 aa). Residues 248–406 are 2-C-methyl-D-erythritol 2,4-cyclodiphosphate synthase; the sequence is FIGMGFDTHA…HASMRYKQKL (159 aa). A divalent metal cation-binding residues include D254 and H256. 4-CDP-2-C-methyl-D-erythritol 2-phosphate-binding positions include 254–256 and 280–281; these read DTH and HS. H288 contributes to the a divalent metal cation binding site. Residues 302–304, 307–311, 378–381, and F385 contribute to the 4-CDP-2-C-methyl-D-erythritol 2-phosphate site; these read DIG, FPDND, and TTME.

In the N-terminal section; belongs to the IspD/TarI cytidylyltransferase family. IspD subfamily. This sequence in the C-terminal section; belongs to the IspF family. A divalent metal cation serves as cofactor.

The catalysed reaction is 2-C-methyl-D-erythritol 4-phosphate + CTP + H(+) = 4-CDP-2-C-methyl-D-erythritol + diphosphate. It carries out the reaction 4-CDP-2-C-methyl-D-erythritol 2-phosphate = 2-C-methyl-D-erythritol 2,4-cyclic diphosphate + CMP. It participates in isoprenoid biosynthesis; isopentenyl diphosphate biosynthesis via DXP pathway; isopentenyl diphosphate from 1-deoxy-D-xylulose 5-phosphate: step 2/6. It functions in the pathway isoprenoid biosynthesis; isopentenyl diphosphate biosynthesis via DXP pathway; isopentenyl diphosphate from 1-deoxy-D-xylulose 5-phosphate: step 4/6. In terms of biological role, bifunctional enzyme that catalyzes the formation of 4-diphosphocytidyl-2-C-methyl-D-erythritol from CTP and 2-C-methyl-D-erythritol 4-phosphate (MEP) (IspD), and catalyzes the conversion of 4-diphosphocytidyl-2-C-methyl-D-erythritol 2-phosphate (CDP-ME2P) to 2-C-methyl-D-erythritol 2,4-cyclodiphosphate (ME-CPP) with a corresponding release of cytidine 5-monophosphate (CMP) (IspF). This Helicobacter acinonychis (strain Sheeba) protein is Bifunctional enzyme IspD/IspF.